A 442-amino-acid chain; its full sequence is UPF0489 protein C5orf22 homolog (442 aa).

Residues 175 to 208 form a disordered region; sequence SSAKKPKLALEDSRNTASTNCDSSSEGLEKDTAT. Positions 189–200 are enriched in polar residues; the sequence is NTASTNCDSSSE.

Belongs to the UPF0489 family.

The chain is UPF0489 protein C5orf22 homolog from Pongo abelii (Sumatran orangutan).